The chain runs to 524 residues: Beta-glucosidase 22 (524 aa).

A signal peptide spans 1 to 24 (MALQKFPLLGLLFLITIVVSSTIA). Q55 serves as a coordination point for a beta-D-glucoside. The N-linked (GlcNAc...) asparagine glycan is linked to N61. Residues H158 and 203 to 204 (NE) contribute to the a beta-D-glucoside site. Residue E204 is the Proton donor of the active site. A disulfide bridge links C223 with C230. Residues Y346, E418, W468, 475-476 (EW), and F484 contribute to the a beta-D-glucoside site. The active-site Nucleophile is the E418. Residue N494 is glycosylated (N-linked (GlcNAc...) asparagine). A Prevents secretion from ER motif is present at residues 521-524 (KDEL).

It belongs to the glycosyl hydrolase 1 family. In terms of assembly, component of the PYK10 complex, at least composed of PYK10/BGLU23, BGLU21, BGLU22, JAL22, JAL23, PBP1/JAL30, PBP2/JAL31, JAL32, JAL33, JAL34, JAL35, GLL22 and GLL23. As to expression, expressed exclusively in roots.

The protein resides in the endoplasmic reticulum lumen. The enzyme catalyses Hydrolysis of terminal, non-reducing beta-D-glucosyl residues with release of beta-D-glucose.. Its activity is regulated as follows. Activated upon binding to PBP1 or PBP2. Its function is as follows. Beta-D-glucosidase active on scopolin &gt;&gt; esculin &gt;&gt; 4-MU-glucoside. No activity with DIMBOA-glucoside, pNP-glucoside, oNP-glucoside and sinigrin as substrates. The protein is Beta-glucosidase 22 of Arabidopsis thaliana (Mouse-ear cress).